The following is a 628-amino-acid chain: Vacuolar-sorting receptor 4 (628 aa).

An N-terminal signal peptide occupies residues 1–24 (MKQLLCYLPWLLLLSLVVSPFNEA). Residues 25 to 569 (RFVVEKNSLS…SKTGSQVKSA (545 aa)) are Lumenal-facing. The region spanning 56 to 168 (QYGGSMAGTV…GFGEKLKKAI (113 aa)) is the PA domain. Asn148, Asn294, and Asn434 each carry an N-linked (GlcNAc...) asparagine glycan. EGF-like domains follow at residues 416 to 466 (ETNE…SHCE) and 469 to 516 (GPGR…KKCE). 7 disulfides stabilise this stretch: Cys420–Cys438, Cys427–Cys447, Cys449–Cys465, Cys473–Cys493, Cys480–Cys501, Cys503–Cys515, and Cys545–Cys558. The 43-residue stretch at 517 to 559 (DINECKEKKACQCPECSCKNTWGSYECSCSGDLLYMRDHDTCI) folds into the EGF-like 3; calcium-binding domain. Residues 570–590 (WAAVWLIMLSLGLAAAGAYLV) traverse the membrane as a helical segment. Residues 591–628 (YKYRLRQYMDSEIRAIMAQYMPLDSQPEVPNHTNDERA) are Cytoplasmic-facing. A Tyrosine-based internalization motif motif is present at residues 610–613 (YMPL).

The protein belongs to the VSR (BP-80) family. As to expression, expressed at low levels in seeds, seedlings, roots, stems, leaves, flowers and siliques.

The protein resides in the membrane. It localises to the golgi apparatus membrane. The protein localises to the cytoplasmic vesicle. It is found in the clathrin-coated vesicle membrane. Its subcellular location is the prevacuolar compartment membrane. In terms of biological role, vacuolar-sorting receptor (VSR) involved in clathrin-coated vesicles sorting from Golgi apparatus to vacuoles. This is Vacuolar-sorting receptor 4 (VSR4) from Arabidopsis thaliana (Mouse-ear cress).